The sequence spans 86 residues: Kappa-theraphotoxin-Cg1a 2 (86 aa).

The N-terminal stretch at 1–21 (MKVSVVITLAVLGVMFVWASA) is a signal peptide. Positions 22 to 50 (AELEERGSDQRDSPAWLKSMERIFQSEER) are excised as a propeptide. 3 disulfides stabilise this stretch: Cys-52–Cys-66, Cys-59–Cys-71, and Cys-65–Cys-78. Phe-84 is subject to Phenylalanine amide.

This sequence belongs to the neurotoxin 10 (Hwtx-1) family. 28 (Jztx-11) subfamily. In terms of tissue distribution, expressed by the venom gland.

The protein resides in the secreted. Its function is as follows. This toxin acts as a voltage-dependent gating-modifier. It inhibits the sodium conductance (IC(50)=124 nM) and slows the fast inactivation (EC(50)=1180 nM) of Nav1.5/SCN5A. It significantly shifts the activation to more depolarized voltages and decreases the deactivation of Nav1.5 currents upon extreme depolarization, but only slightly affects voltage-dependence of steady-state inactivation. In addition, this toxin causes an approximately five-fold decrease in the rate of recovery from inactivation and an approximately 1.9-fold reduction in the closed-state inactivation rate. This toxin integrates the functions of site 3 toxins (alpha-scorpion toxins) with site 4 toxins (beta-scorpion and spider toxins) by targeting multiple sites on Nav1.5. Also shows inhibition of voltage-gated potassium channels (5 uM completely inhibits Kv2.1/KCNB1, whereas 5 uM moderately inhibits Kv4.2/KCND2 Kv4.1/KCND1 channels). This Chilobrachys guangxiensis (Chinese earth tiger tarantula) protein is Kappa-theraphotoxin-Cg1a 2.